Reading from the N-terminus, the 577-residue chain is Heavy metal-associated isoprenylated plant protein 34 (577 aa).

One can recognise an HMA domain in the interval 9–72; it reads LQTCVLKVNV…KLSKSGKHAE (64 aa). Residues Cys-20 and Cys-23 each coordinate a metal cation. A compositionally biased stretch (gly residues) spans 77 to 87; that stretch reads GGGGGGGGGKG. Disordered stretches follow at residues 77 to 136 and 150 to 451; these read GGGG…QPMQ and AAHG…GPGG. Residues 97 to 106 show a composition bias toward low complexity; the sequence is NLNMGGNNKP. The segment covering 118 to 129 has biased composition (gly residues); it reads KAGGGGGGGQNH. The segment covering 168 to 177 has biased composition (basic and acidic residues); it reads KDQKKSVKFA. The segment covering 178–213 has biased composition (acidic residues); the sequence is DDEDDEFSEDDYDDEDFSEDDYDDDEFDDDEDDDDE. Low complexity predominate over residues 227 to 244; that stretch reads HMPPNKMMMPNKMMPQMG. Gly residues-rich tracts occupy residues 245-254 and 266-281; these read GHHGNGGGPK and FKGG…GGGF. Composition is skewed to basic and acidic residues over residues 294 to 326 and 344 to 358; these read KNGK…KTDA and NGDE…DGHG. 2 stretches are compositionally biased toward gly residues: residues 379-392 and 420-451; these read KKGG…GHGG and GIGG…GPGG. Cys-574 bears the Cysteine methyl ester mark. Residue Cys-574 is the site of S-farnesyl cysteine attachment. The propeptide at 575–577 is removed in mature form; it reads SIM.

Belongs to the HIPP family.

Its function is as follows. Heavy-metal-binding protein. The polypeptide is Heavy metal-associated isoprenylated plant protein 34 (Arabidopsis thaliana (Mouse-ear cress)).